The following is a 152-amino-acid chain: Putative pre-16S rRNA nuclease (152 aa).

The protein belongs to the YqgF nuclease family.

It localises to the cytoplasm. Its function is as follows. Could be a nuclease involved in processing of the 5'-end of pre-16S rRNA. The chain is Putative pre-16S rRNA nuclease from Synechocystis sp. (strain ATCC 27184 / PCC 6803 / Kazusa).